The sequence spans 153 residues: UPF0178 protein Sfum_1097 (153 aa).

Belongs to the UPF0178 family.

This Syntrophobacter fumaroxidans (strain DSM 10017 / MPOB) protein is UPF0178 protein Sfum_1097.